We begin with the raw amino-acid sequence, 332 residues long: MTKYNSGSSEMPAAQTIKQEYHNGYGQPTHPGYGFSAYSQQNPIAHPGQNPHQTLQNFFSRFNAVGDASAGNGGAASISANGSGSSCNYSHANHHPAELDKPLGMNMTPSPIYTTDYDDENSSLSSEEHVLAPLVCSSAQSSRPCLTWACKACKKKSVTVDRRKAATMRERRRLRKVNEAFEILKRRTSSNPNQRLPKVEILRNAIEYIESLEDLLQESSTTRDGDNLAPSLSGKSCQSDYLSSYAGAYLEDKLSFYNKHMEKYGQFTDFDGNANGSSLDCLNLIVQSINKSTTSPIQNKATPSASDTQSPPSSGATAPTSLHVNFKRKCST.

The disordered stretch occupies residues 22 to 54; it reads HNGYGQPTHPGYGFSAYSQQNPIAHPGQNPHQT. The bHLH domain occupies 161-212; it reads DRRKAATMRERRRLRKVNEAFEILKRRTSSNPNQRLPKVEILRNAIEYIESL. Polar residues predominate over residues 293 to 309; sequence TTSPIQNKATPSASDTQ. Positions 293 to 332 are disordered; it reads TTSPIQNKATPSASDTQSPPSSGATAPTSLHVNFKRKCST. Residues 310–321 are compositionally biased toward low complexity; the sequence is SPPSSGATAPTS.

In terms of assembly, efficient DNA binding requires dimerization with another bHLH protein.

It is found in the nucleus. Its function is as follows. May play an important role in the early development of muscle. The sequence is that of Myogenic-determination protein (nau) from Drosophila melanogaster (Fruit fly).